The primary structure comprises 436 residues: Serine protease inhibitor A6 (436 aa).

The N-terminal stretch at 1–16 (MHLLVYLSLFFALALA) is a signal peptide. A disordered region spans residues 26–60 (KHRHRHEQQGHHDSAKHGHQKDKQQQEQIKNDEGK). Residues 32–60 (EQQGHHDSAKHGHQKDKQQQEQIKNDEGK) show a composition bias toward basic and acidic residues. Residues N260 and N289 are each glycosylated (N-linked (GlcNAc...) asparagine).

Belongs to the serpin family. As to expression, liver.

It is found in the secreted. It localises to the extracellular space. Not yet known. In Xenopus laevis (African clawed frog), this protein is Serine protease inhibitor A6 (serpina6).